A 279-amino-acid chain; its full sequence is Tryptophan synthase alpha chain (279 aa).

Active-site proton acceptor residues include glutamate 63 and aspartate 74.

This sequence belongs to the TrpA family. Tetramer of two alpha and two beta chains.

The enzyme catalyses (1S,2R)-1-C-(indol-3-yl)glycerol 3-phosphate + L-serine = D-glyceraldehyde 3-phosphate + L-tryptophan + H2O. The protein operates within amino-acid biosynthesis; L-tryptophan biosynthesis; L-tryptophan from chorismate: step 5/5. Functionally, the alpha subunit is responsible for the aldol cleavage of indoleglycerol phosphate to indole and glyceraldehyde 3-phosphate. The protein is Tryptophan synthase alpha chain of Prochlorococcus marinus subsp. pastoris (strain CCMP1986 / NIES-2087 / MED4).